Consider the following 492-residue polypeptide: Probable cobyric acid synthase (492 aa).

The 193-residue stretch at 252–444 (PIEVNIVKFS…FHGILENFEF (193 aa)) folds into the GATase cobBQ-type domain. The active-site Nucleophile is the C330. H436 is an active-site residue.

The protein belongs to the CobB/CobQ family. CobQ subfamily.

The protein operates within cofactor biosynthesis; adenosylcobalamin biosynthesis. In terms of biological role, catalyzes amidations at positions B, D, E, and G on adenosylcobyrinic A,C-diamide. NH(2) groups are provided by glutamine, and one molecule of ATP is hydrogenolyzed for each amidation. The protein is Probable cobyric acid synthase of Methanococcus maripaludis (strain C5 / ATCC BAA-1333).